A 287-amino-acid chain; its full sequence is Inorganic pyrophosphatase (287 aa).

Arginine 79 contributes to the diphosphate binding site. Aspartate 116, aspartate 121, and aspartate 153 together coordinate Mg(2+).

Belongs to the PPase family. Homodimer. The cofactor is Mg(2+).

Its subcellular location is the cytoplasm. The enzyme catalyses diphosphate + H2O = 2 phosphate + H(+). This is Inorganic pyrophosphatase (IPP1) from Kluyveromyces lactis (strain ATCC 8585 / CBS 2359 / DSM 70799 / NBRC 1267 / NRRL Y-1140 / WM37) (Yeast).